We begin with the raw amino-acid sequence, 155 residues long: Small ribosomal subunit protein uS9 (155 aa).

It belongs to the universal ribosomal protein uS9 family.

The sequence is that of Small ribosomal subunit protein uS9 from Sinorhizobium fredii (strain NBRC 101917 / NGR234).